Consider the following 293-residue polypeptide: Ribosomal protein L11 methyltransferase (293 aa).

S-adenosyl-L-methionine-binding residues include Thr-145, Gly-166, Asp-188, and Asn-230.

Belongs to the methyltransferase superfamily. PrmA family.

Its subcellular location is the cytoplasm. It catalyses the reaction L-lysyl-[protein] + 3 S-adenosyl-L-methionine = N(6),N(6),N(6)-trimethyl-L-lysyl-[protein] + 3 S-adenosyl-L-homocysteine + 3 H(+). Methylates ribosomal protein L11. This is Ribosomal protein L11 methyltransferase from Escherichia coli (strain 55989 / EAEC).